Consider the following 357-residue polypeptide: Golgi to ER traffic protein 2 (357 aa).

Residues 1-224 lie on the Cytoplasmic side of the membrane; that stretch reads MSETTDKQLT…AKYHTYQEQL (224 aa). Residues 65-81 show a composition bias toward low complexity; the sequence is TDTATVTDSSTNATSVS. The disordered stretch occupies residues 65–99; sequence TDTATVTDSSTNATSVSPSAAKATPTSTGVSSAIS. Over residues 88 to 98 the composition is skewed to polar residues; the sequence is TPTSTGVSSAI. Residues 225-245 form a helical membrane-spanning segment; sequence WQFRFLVVRILATIFNFAYHF. The Lumenal portion of the chain corresponds to 246–270; the sequence is ITIPSFTASNHAYVRDLSEVYPLLG. A helical membrane pass occupies residues 271 to 290; that stretch reads FMTIFTSIEVVIIATYYLLF. Topologically, residues 291-334 are cytoplasmic; sequence TKLGLFHASNQKSFILKGISTLSMFVPQLLRYEPLVATFLGYKE. The helical transmembrane segment at 335 to 355 threads the bilayer; the sequence is LLGIFVGDLSLVVVMFGLLSF. The Lumenal portion of the chain corresponds to 356-357; that stretch reads SN.

This sequence belongs to the GET2 family. Component of the Golgi to ER traffic (GET) complex, which is composed of GET1, GET2 and GET3. Within the complex, GET1 and GET2 form a heterotetramer which is stabilized by phosphatidylinositol binding and which binds to the GET3 homodimer.

The protein resides in the endoplasmic reticulum membrane. Its subcellular location is the golgi apparatus membrane. In terms of biological role, required for the post-translational delivery of tail-anchored (TA) proteins to the endoplasmic reticulum. Together with GET1, acts as a membrane receptor for soluble GET3, which recognizes and selectively binds the transmembrane domain of TA proteins in the cytosol. The GET complex cooperates with the HDEL receptor ERD2 to mediate the ATP-dependent retrieval of resident ER proteins that contain a C-terminal H-D-E-L retention signal from the Golgi to the ER. The chain is Golgi to ER traffic protein 2 from Lodderomyces elongisporus (strain ATCC 11503 / CBS 2605 / JCM 1781 / NBRC 1676 / NRRL YB-4239) (Yeast).